We begin with the raw amino-acid sequence, 123 residues long: Protein HesB, heterocyst (123 aa).

This sequence belongs to the HesB/IscA family.

In terms of biological role, may be required for efficient nitrogen fixation. The chain is Protein HesB, heterocyst (hesB1) from Trichormus variabilis (strain ATCC 29413 / PCC 7937) (Anabaena variabilis).